The following is a 231-amino-acid chain: 7-cyano-7-deazaguanine synthase (231 aa).

Residue 8-18 (FSGGQDSTTCL) participates in ATP binding. Residues cysteine 188, cysteine 197, cysteine 200, and cysteine 203 each coordinate Zn(2+).

The protein belongs to the QueC family. Zn(2+) is required as a cofactor.

It carries out the reaction 7-carboxy-7-deazaguanine + NH4(+) + ATP = 7-cyano-7-deazaguanine + ADP + phosphate + H2O + H(+). The protein operates within purine metabolism; 7-cyano-7-deazaguanine biosynthesis. Catalyzes the ATP-dependent conversion of 7-carboxy-7-deazaguanine (CDG) to 7-cyano-7-deazaguanine (preQ(0)). The sequence is that of 7-cyano-7-deazaguanine synthase from Shigella flexneri serotype 5b (strain 8401).